The following is a 246-amino-acid chain: 3-deoxy-manno-octulosonate cytidylyltransferase (246 aa).

This sequence belongs to the KdsB family.

Its subcellular location is the cytoplasm. The enzyme catalyses 3-deoxy-alpha-D-manno-oct-2-ulosonate + CTP = CMP-3-deoxy-beta-D-manno-octulosonate + diphosphate. The protein operates within nucleotide-sugar biosynthesis; CMP-3-deoxy-D-manno-octulosonate biosynthesis; CMP-3-deoxy-D-manno-octulosonate from 3-deoxy-D-manno-octulosonate and CTP: step 1/1. It participates in bacterial outer membrane biogenesis; lipopolysaccharide biosynthesis. Its function is as follows. Activates KDO (a required 8-carbon sugar) for incorporation into bacterial lipopolysaccharide in Gram-negative bacteria. The protein is 3-deoxy-manno-octulosonate cytidylyltransferase of Rickettsia peacockii (strain Rustic).